The primary structure comprises 596 residues: Phosphoenolpyruvate carboxykinase [GTP] (596 aa).

Substrate contacts are provided by residues Arg77 and 205-207 (YGG). Mn(2+)-binding residues include Lys214 and His234. Position 256 (Ser256) interacts with substrate. GTP is bound at residue 257 to 262 (ACGKTN). Cys258 is a catalytic residue. Asp283 contacts Mn(2+). The disordered stretch occupies residues 362-388 (KKGSTEKAAHPNSRFTAPAKNNPAISP). 373 to 375 (NSR) contributes to the substrate binding site. GTP-binding positions include Arg375, Arg406, and 499–502 (YGDN).

The protein belongs to the phosphoenolpyruvate carboxykinase [GTP] family. In terms of assembly, monomer. The cofactor is Mn(2+).

The protein resides in the cytoplasm. It carries out the reaction oxaloacetate + GTP = phosphoenolpyruvate + GDP + CO2. It participates in carbohydrate biosynthesis; gluconeogenesis. Its function is as follows. Catalyzes the conversion of oxaloacetate (OAA) to phosphoenolpyruvate (PEP), the rate-limiting step in the metabolic pathway that produces glucose from lactate and other precursors derived from the citric acid cycle. The sequence is that of Phosphoenolpyruvate carboxykinase [GTP] from Anaeromyxobacter sp. (strain K).